Reading from the N-terminus, the 332-residue chain is Holliday junction branch migration complex subunit RuvB (332 aa).

The interval 1–181 (MERIISELEM…FGVSHKMEYY (181 aa)) is large ATPase domain (RuvB-L). Residues L20, R21, G62, K65, T66, T67, R171, Y181, and R218 each contribute to the ATP site. T66 lines the Mg(2+) pocket. Residues 182–252 (NENEIKSIII…SAKNALDMLG (71 aa)) are small ATPAse domain (RuvB-S). Positions 255–332 (SNGLDDLDRN…QHFKKVEVKI (78 aa)) are head domain (RuvB-H). DNA contacts are provided by R291, R310, and R315.

This sequence belongs to the RuvB family. Homohexamer. Forms an RuvA(8)-RuvB(12)-Holliday junction (HJ) complex. HJ DNA is sandwiched between 2 RuvA tetramers; dsDNA enters through RuvA and exits via RuvB. An RuvB hexamer assembles on each DNA strand where it exits the tetramer. Each RuvB hexamer is contacted by two RuvA subunits (via domain III) on 2 adjacent RuvB subunits; this complex drives branch migration. In the full resolvosome a probable DNA-RuvA(4)-RuvB(12)-RuvC(2) complex forms which resolves the HJ.

It is found in the cytoplasm. The enzyme catalyses ATP + H2O = ADP + phosphate + H(+). The RuvA-RuvB-RuvC complex processes Holliday junction (HJ) DNA during genetic recombination and DNA repair, while the RuvA-RuvB complex plays an important role in the rescue of blocked DNA replication forks via replication fork reversal (RFR). RuvA specifically binds to HJ cruciform DNA, conferring on it an open structure. The RuvB hexamer acts as an ATP-dependent pump, pulling dsDNA into and through the RuvAB complex. RuvB forms 2 homohexamers on either side of HJ DNA bound by 1 or 2 RuvA tetramers; 4 subunits per hexamer contact DNA at a time. Coordinated motions by a converter formed by DNA-disengaged RuvB subunits stimulates ATP hydrolysis and nucleotide exchange. Immobilization of the converter enables RuvB to convert the ATP-contained energy into a lever motion, pulling 2 nucleotides of DNA out of the RuvA tetramer per ATP hydrolyzed, thus driving DNA branch migration. The RuvB motors rotate together with the DNA substrate, which together with the progressing nucleotide cycle form the mechanistic basis for DNA recombination by continuous HJ branch migration. Branch migration allows RuvC to scan DNA until it finds its consensus sequence, where it cleaves and resolves cruciform DNA. In Fusobacterium nucleatum subsp. nucleatum (strain ATCC 25586 / DSM 15643 / BCRC 10681 / CIP 101130 / JCM 8532 / KCTC 2640 / LMG 13131 / VPI 4355), this protein is Holliday junction branch migration complex subunit RuvB.